The chain runs to 328 residues: 2-oxoglutarate-dependent dioxygenase gloE (328 aa).

Residues 170–271 enclose the Fe2OG dioxygenase domain; sequence TRTNLTFLKY…RYTLAYFLRP (102 aa). 3 residues coordinate Fe cation: His194, Asp196, and His249. Arg262 is a 2-oxoglutarate binding site.

The protein belongs to the iron/ascorbate-dependent oxidoreductase family. Requires Fe(2+) as cofactor.

Its pathway is mycotoxin biosynthesis. 2-oxoglutarate-dependent dioxygenase; part of the gene cluster that mediates the biosynthesis of pneumocandins, lipohexapeptides of the echinocandin family that prevent fungal cell wall formation by non-competitive inhibition of beta-1,3-glucan synthase. The 10,12-dimethylmyristoyl side chain is synthesized by the reducing polyketide synthase gloL/GLPKS4. The thioesterase gloN/GLHYD exclusively interacts with gloL/GLPKS4 to maintain turnover of the polyketide side chain. The 10R,12S-dimethylmyristic acid is then transferred to the first thiolation domain of the nonribosomal peptide synthetase gloA/GLNRPS4 by the acyl-AMP ligase gloD/GLligase, followed by its acylation to L-ornithine to trigger elongation of the cyclic hexapeptide. L-ornithine, 4R-hydroxyl-L-proline (generated from L-proline by the dioxygenase gloF/GLOXY2), 3S-hydroxyl-L-homotyrosine (generated by gloG/GLHtyB, gloH/GLHtyA, gloI/GLHtyC, gloJ/GLHtyD and hydroxylated at C-3 by the dioxygenase gloM/GLOXY1), 3R-hydroxyl-L-glutamine (generated from L-glutamine probably by the dioxygenase gloE/GLOXY3) and 3S-hydroxyl-L-proline (generated from L-proline by the dioxygenase gloF/GLOXY2 to yield pneumocandin B0), or 3S-hydroxyl-4S-methyl-L-proline (generated from L-leucine by the dioxygenase gloC/GLOXY4 to yield pneumocandin A0) are sequentially added to the growing chain. The last C domain of gloA/GLNRPS4 is proposed to be responsible for cyclization by condensation to form the peptide bond between L-ornithine and 3S-hydroxyl-4S-methyl-L-proline (for pneumocandin A0) or 3S-hydroxyl-L-proline (for pneumocandin B0). Finally, the subsequent C-4 hydroxylation of 3S-hydroxyl-L-homotyrosine and L-ornithine dihydroxylation at C-4 and C-5 are performed by the cytochrome P450 monooxygenases gloP/GLP450-1 and gloO/GLP450-2, respectively. The sequence is that of 2-oxoglutarate-dependent dioxygenase gloE from Glarea lozoyensis (strain ATCC 20868 / MF5171).